A 484-amino-acid polypeptide reads, in one-letter code: tRNA sulfurtransferase (484 aa).

Positions Q63–R167 constitute a THUMP domain. ATP-binding positions include L185–I186, K267, G289, and Q298. A disulfide bridge connects residues C346 and C458. Residues I406–P484 enclose the Rhodanese domain. C458 serves as the catalytic Cysteine persulfide intermediate.

It belongs to the ThiI family.

Its subcellular location is the cytoplasm. The catalysed reaction is [ThiI sulfur-carrier protein]-S-sulfanyl-L-cysteine + a uridine in tRNA + 2 reduced [2Fe-2S]-[ferredoxin] + ATP + H(+) = [ThiI sulfur-carrier protein]-L-cysteine + a 4-thiouridine in tRNA + 2 oxidized [2Fe-2S]-[ferredoxin] + AMP + diphosphate. The enzyme catalyses [ThiS sulfur-carrier protein]-C-terminal Gly-Gly-AMP + S-sulfanyl-L-cysteinyl-[cysteine desulfurase] + AH2 = [ThiS sulfur-carrier protein]-C-terminal-Gly-aminoethanethioate + L-cysteinyl-[cysteine desulfurase] + A + AMP + 2 H(+). The protein operates within cofactor biosynthesis; thiamine diphosphate biosynthesis. Its function is as follows. Catalyzes the ATP-dependent transfer of a sulfur to tRNA to produce 4-thiouridine in position 8 of tRNAs, which functions as a near-UV photosensor. Also catalyzes the transfer of sulfur to the sulfur carrier protein ThiS, forming ThiS-thiocarboxylate. This is a step in the synthesis of thiazole, in the thiamine biosynthesis pathway. The sulfur is donated as persulfide by IscS. This chain is tRNA sulfurtransferase, found in Shewanella putrefaciens (strain CN-32 / ATCC BAA-453).